We begin with the raw amino-acid sequence, 189 residues long: Protein sisterless A (189 aa).

Positions 93–124 (DCRGSGSGSGSGSGSDVKDAQRQRAESCRKSR) are disordered. Residues 108–121 (DVKDAQRQRAESCR) show a composition bias toward basic and acidic residues.

As to quaternary structure, homodimer. Interacts with dpn (via bHLH motif). Interacts with da (via bHLH motif). Interacts with Bap60. As to expression, localizes to all the embryonic nuclei until nuclear cycle 9, when expression ceases in the prepole cell nuclei. Associates with the somatic nuclei through cycle 10. By nuclear cycle 12, distributes uniformly in the somatic portion of the embryo and no longer associates with the nuclei. After early cycle 14 (beginning of cellularization) there is very little or no expression in the periphery of the embryo or in either the somatic or germ cells. In the yolk, accumulates at the nuclei from nuclear cycle 8 until 10-11 hours after fertilization.

Its subcellular location is the nucleus. Functionally, involved in sex determination and dosage compensation. Required for proper expression of Sxl in embryonic somatic cells. Also has an essential function in the yolk nuclei. Involved in endoderm migration and midgut formation. This is Protein sisterless A (sisA) from Drosophila melanogaster (Fruit fly).